A 403-amino-acid chain; its full sequence is Argininosuccinate synthase (403 aa).

ATP-binding positions include 13-21 (AYSGGLDTS) and A40. Y92 and S97 together coordinate L-citrulline. ATP is bound at residue G122. Residues T124, N128, and D129 each contribute to the L-aspartate site. L-citrulline is bound at residue N128. The L-citrulline site is built by R132, S181, S190, E266, and Y278.

This sequence belongs to the argininosuccinate synthase family. Type 1 subfamily. As to quaternary structure, homotetramer.

It localises to the cytoplasm. The enzyme catalyses L-citrulline + L-aspartate + ATP = 2-(N(omega)-L-arginino)succinate + AMP + diphosphate + H(+). It functions in the pathway amino-acid biosynthesis; L-arginine biosynthesis; L-arginine from L-ornithine and carbamoyl phosphate: step 2/3. The protein is Argininosuccinate synthase of Aliivibrio fischeri (strain ATCC 700601 / ES114) (Vibrio fischeri).